The chain runs to 170 residues: Translocon-associated protein subunit gamma (170 aa).

The Lumenal segment spans residues 1–24 (MAEVDEFSAFRHENDVSIEQRIVY). The helical transmembrane segment at 25-45 (FINSLIVALVPVYLYHAIFFM) threads the bilayer. At 46–51 (SIDDHM) the chain is on the cytoplasmic side. A helical membrane pass occupies residues 52–72 (IIYGSVTLFAAIVLTFAYNNI). Residues 73–121 (YRMKRLKLSASREHISIASKNKVGDKKKFAAAQKEVQALVTSHEAIAAS) lie on the Lumenal side of the membrane. The helical transmembrane segment at 122-141 (IMYNNAVFLICVSIFSFIIF) threads the bilayer. Residues 142-145 (KNVP) lie on the Cytoplasmic side of the membrane. A helical transmembrane segment spans residues 146–168 (LVYNYIISISLGAGLTSFLSTSS).

Belongs to the TRAP-gamma family. As to quaternary structure, heterotrimer of TRAP-alpha, TRAP-beta and TRAP-gamma.

The protein resides in the endoplasmic reticulum membrane. In terms of biological role, TRAP proteins are part of a complex whose function is to bind calcium to the ER membrane and thereby regulate the retention of ER resident proteins. This chain is Translocon-associated protein subunit gamma (ssr3), found in Dictyostelium discoideum (Social amoeba).